Consider the following 575-residue polypeptide: Protein NRT1/ PTR FAMILY 5.6 (575 aa).

The next 2 membrane-spanning stretches (helical) occupy residues 44 to 64 and 88 to 108; these read AALF…GLAT and WSGV…AYLG. T112 is subject to Phosphothreonine. Helical transmembrane passes span 113 to 133, 153 to 173, 195 to 215, 223 to 243, 339 to 359, 375 to 395, 420 to 440, 457 to 477, 493 to 513, and 541 to 561; these read VLVA…SWFI, VAFF…KPSL, FFNW…TAVA, WGVA…IFFI, LIIN…CATQ, IGGF…TLII, ILQR…IAAL, VIWL…TLVG, LGIA…NLLI, and FYWF…IVAK.

The protein belongs to the major facilitator superfamily. Proton-dependent oligopeptide transporter (POT/PTR) (TC 2.A.17) family. In terms of tissue distribution, expressed in stems, shoots, leaves, flowers and siliques.

It is found in the membrane. This is Protein NRT1/ PTR FAMILY 5.6 (NPF5.6) from Arabidopsis thaliana (Mouse-ear cress).